The following is a 102-amino-acid chain: FMRFamide-like neuropeptides 9 (102 aa).

Residues 1 to 19 (MNQFYALFLVACIAAMANA) form the signal peptide. Residues 20 to 63 (YEEPDLDALAEFCGKESNRKYCDQIAQLATQHAIGINQEQVRME) constitute a propeptide that is removed on maturation. At Phe-72 the chain carries Phenylalanine amide. Positions 75 to 90 (RSGYPLVIDDEEMRMD) are excised as a propeptide. At Phe-99 the chain carries Phenylalanine amide.

This sequence belongs to the FARP (FMRFamide related peptide) family. In terms of tissue distribution, each flp gene is expressed in a distinct set of neurons.

It is found in the secreted. In terms of biological role, FMRFamides and FMRFamide-like peptides are neuropeptides. Functionally, KPSFVRF-amide: Has no effect on somatic body wall muscle, inhibits contraction of vaginal vera muscle, and inhibits the activity of the dissected pharyngeal myogenic muscle system. Acts as a ligand for the npr-22 receptor in vitro. In Caenorhabditis elegans, this protein is FMRFamide-like neuropeptides 9.